Consider the following 1571-residue polypeptide: Pentafunctional AROM polypeptide (1571 aa).

The segment at 1-380 (MTSVEKVSIL…YQLKAHQVSK (380 aa)) is 3-dehydroquinate synthase. NAD(+)-binding positions include 43-45 (DTN), 81-84 (ENNK), 112-114 (GGV), and D117. R128 contributes to the 7-phospho-2-dehydro-3-deoxy-D-arabino-heptonate binding site. An NAD(+)-binding site is contributed by 137-138 (TS). 7-phospho-2-dehydro-3-deoxy-D-arabino-heptonate is bound by residues D144 and K150. Position 159 (K159) interacts with NAD(+). N160 lines the 7-phospho-2-dehydro-3-deoxy-D-arabino-heptonate pocket. NAD(+) contacts are provided by residues 177–180 (FLET) and N188. E192 provides a ligand contact to Zn(2+). Residues 192–195 (EVVK) and K244 each bind 7-phospho-2-dehydro-3-deoxy-D-arabino-heptonate. E254 (proton acceptor; for 3-dehydroquinate synthase activity) is an active-site residue. Residues 258 to 262 (RNLLN) and H265 contribute to the 7-phospho-2-dehydro-3-deoxy-D-arabino-heptonate site. H265 lines the Zn(2+) pocket. The Proton acceptor; for 3-dehydroquinate synthase activity role is filled by H269. The 7-phospho-2-dehydro-3-deoxy-D-arabino-heptonate site is built by H281 and K352. Residue H281 coordinates Zn(2+). The segment at 393–843 (VHPFDDKLIP…WDILHTKFKV (451 aa)) is EPSP synthase. The For EPSP synthase activity role is filled by C825. The tract at residues 868–1058 (KRSIIVIGMR…IPKKRSFYTS (191 aa)) is shikimate kinase. 875–882 (GMRGAGKS) is an ATP binding site. The interval 1059 to 1271 (LTFSDLTEVA…GNEGALDVAQ (213 aa)) is 3-dehydroquinase. K1204 functions as the Schiff-base intermediate with substrate; for 3-dehydroquinate dehydratase activity in the catalytic mechanism. Residues 1284 to 1571 (EKHFWIVGNP…DVVHDAVVNQ (288 aa)) are shikimate dehydrogenase.

It in the N-terminal section; belongs to the sugar phosphate cyclases superfamily. Dehydroquinate synthase family. The protein in the 2nd section; belongs to the EPSP synthase family. This sequence in the 3rd section; belongs to the shikimate kinase family. In the 4th section; belongs to the type-I 3-dehydroquinase family. It in the C-terminal section; belongs to the shikimate dehydrogenase family. In terms of assembly, homodimer. The cofactor is Zn(2+).

Its subcellular location is the cytoplasm. The enzyme catalyses 7-phospho-2-dehydro-3-deoxy-D-arabino-heptonate = 3-dehydroquinate + phosphate. It catalyses the reaction 3-dehydroquinate = 3-dehydroshikimate + H2O. The catalysed reaction is shikimate + NADP(+) = 3-dehydroshikimate + NADPH + H(+). It carries out the reaction shikimate + ATP = 3-phosphoshikimate + ADP + H(+). The enzyme catalyses 3-phosphoshikimate + phosphoenolpyruvate = 5-O-(1-carboxyvinyl)-3-phosphoshikimate + phosphate. It functions in the pathway metabolic intermediate biosynthesis; chorismate biosynthesis; chorismate from D-erythrose 4-phosphate and phosphoenolpyruvate: step 2/7. The protein operates within metabolic intermediate biosynthesis; chorismate biosynthesis; chorismate from D-erythrose 4-phosphate and phosphoenolpyruvate: step 3/7. Its pathway is metabolic intermediate biosynthesis; chorismate biosynthesis; chorismate from D-erythrose 4-phosphate and phosphoenolpyruvate: step 4/7. It participates in metabolic intermediate biosynthesis; chorismate biosynthesis; chorismate from D-erythrose 4-phosphate and phosphoenolpyruvate: step 5/7. It functions in the pathway metabolic intermediate biosynthesis; chorismate biosynthesis; chorismate from D-erythrose 4-phosphate and phosphoenolpyruvate: step 6/7. Its function is as follows. The AROM polypeptide catalyzes 5 consecutive enzymatic reactions in prechorismate polyaromatic amino acid biosynthesis. The chain is Pentafunctional AROM polypeptide from Scheffersomyces stipitis (strain ATCC 58785 / CBS 6054 / NBRC 10063 / NRRL Y-11545) (Yeast).